Here is a 1130-residue protein sequence, read N- to C-terminus: ABC transporter ATM1 (1130 aa).

A mitochondrion-targeting transit peptide spans Met-1–Leu-65. Disordered regions lie at residues Asp-191–Pro-212, His-276–Ser-315, and Ser-341–Pro-385. 2 stretches are compositionally biased toward polar residues: residues Ser-195–Ala-206 and Gly-305–Ser-315. A helical transmembrane segment spans residues Pro-406 to Leu-426. Over residues Pro-468–Glu-502 the composition is skewed to low complexity. A disordered region spans residues Pro-468–Gly-554. A compositionally biased stretch (basic and acidic residues) spans Gly-503 to Ser-523. Transmembrane regions (helical) follow at residues Ile-574–Gly-594, Val-653–Gly-673, Gly-678–Val-698, Leu-761–Ala-781, and Leu-791–Leu-811. One can recognise an ABC transmembrane type-1 domain in the interval Val-587–Leu-823. The ABC transporter domain maps to Val-857–Glu-1111. Gly-910–Ser-917 is a binding site for ATP.

This sequence belongs to the ABC transporter superfamily. ABCB family. Heavy Metal importer (TC 3.A.1.210) subfamily. Homodimer.

Its subcellular location is the mitochondrion membrane. In terms of biological role, probably transports iron-sulfur clusters in an ATP-dependent manner. Plays a role in [Fe-S] proteins homeostasis. Required for optimal parasite growth and lytic cycle. The chain is ABC transporter ATM1 from Toxoplasma gondii (strain ATCC 50611 / Me49).